The primary structure comprises 140 residues: Large ribosomal subunit protein uL24 (140 aa).

The protein belongs to the universal ribosomal protein uL24 family. As to quaternary structure, part of the 50S ribosomal subunit.

In terms of biological role, one of two assembly initiator proteins, it binds directly to the 5'-end of the 23S rRNA, where it nucleates assembly of the 50S subunit. Its function is as follows. Located at the polypeptide exit tunnel on the outside of the subunit. This chain is Large ribosomal subunit protein uL24, found in Nanoarchaeum equitans (strain Kin4-M).